The chain runs to 337 residues: Nucleoid-associated protein HSM_0096 (337 aa).

The protein belongs to the YejK family.

It is found in the cytoplasm. It localises to the nucleoid. This is Nucleoid-associated protein HSM_0096 from Histophilus somni (strain 2336) (Haemophilus somnus).